The primary structure comprises 163 residues: MFQRITQAVKGAALLDFAGAFGLAMKYMVAPKKTVIYPNERNPQSPRFRGEHALRRYPSGEERCIACKLCEAICPAQAITIEAEPREDGSRRTTRYDIDMVKCIYCGLCQEACPVDAIVEGPNTEFATETREELYYDKERLLDNGDRWERLIAKNLELDAPYR.

2 consecutive 4Fe-4S ferredoxin-type domains span residues 55–84 (RRYPSGEERCIACKLCEAICPAQAITIEAE) and 94–123 (TRYDIDMVKCIYCGLCQEACPVDAIVEGPN). 8 residues coordinate [4Fe-4S] cluster: C64, C67, C70, C74, C103, C106, C109, and C113.

This sequence belongs to the complex I 23 kDa subunit family. As to quaternary structure, NDH-1 is composed of 14 different subunits. Subunits NuoA, H, J, K, L, M, N constitute the membrane sector of the complex. It depends on [4Fe-4S] cluster as a cofactor.

The protein localises to the cell inner membrane. It carries out the reaction a quinone + NADH + 5 H(+)(in) = a quinol + NAD(+) + 4 H(+)(out). In terms of biological role, NDH-1 shuttles electrons from NADH, via FMN and iron-sulfur (Fe-S) centers, to quinones in the respiratory chain. The immediate electron acceptor for the enzyme in this species is believed to be ubiquinone. Couples the redox reaction to proton translocation (for every two electrons transferred, four hydrogen ions are translocated across the cytoplasmic membrane), and thus conserves the redox energy in a proton gradient. The chain is NADH-quinone oxidoreductase subunit I from Caulobacter vibrioides (strain ATCC 19089 / CIP 103742 / CB 15) (Caulobacter crescentus).